The following is a 113-amino-acid chain: RING-box protein 2 (113 aa).

The disordered stretch occupies residues 1 to 26 (MADVEDGEEPCVLSSHSGSAGSKSGG). An N-acetylalanine modification is found at alanine 2. Zn(2+)-binding residues include cysteine 50, cysteine 53, cysteine 61, cysteine 64, cysteine 73, cysteine 80, histidine 82, histidine 85, cysteine 87, cysteine 88, cysteine 99, and cysteine 102. The RING-type zinc finger occupies 61–103 (CLRCQAENKQEDCVVVWGECNHSFHNCCMSLWVKQNNRCPLCQ).

This sequence belongs to the RING-box family. As to quaternary structure, catalytic component of multiple cullin-5-RING E3 ubiquitin-protein ligase complexes (ECS complexes, also named CRL5 complexes) composed of CUL5, Elongin BC (ELOB and ELOC), RNF7/RBX2 and a variable SOCS box domain-containing protein as substrate-specific recognition component. Also interacts (with lower preference) with CUL1, CUL2, CUL3, CUL4A and CUL4B; additional evidence is however required to confirm this result in vivo. Interacts with UBE2F. Interacts with CSNK2B, the interaction is not affected by phosphorylation by CK2. May also interact with DCUN1D1, DCUN1D2, DCUN1D3, DCUN1D4 and DCUN1D5.

It localises to the cytoplasm. It is found in the nucleus. The catalysed reaction is S-ubiquitinyl-[E2 ubiquitin-conjugating enzyme]-L-cysteine + [acceptor protein]-L-lysine = [E2 ubiquitin-conjugating enzyme]-L-cysteine + N(6)-ubiquitinyl-[acceptor protein]-L-lysine.. It catalyses the reaction S-[NEDD8-protein]-yl-[E2 NEDD8-conjugating enzyme]-L-cysteine + [cullin]-L-lysine = [E2 NEDD8-conjugating enzyme]-L-cysteine + N(6)-[NEDD8-protein]-yl-[cullin]-L-lysine.. It functions in the pathway protein modification; protein ubiquitination. It participates in protein modification; protein neddylation. Catalytic component of multiple cullin-5-RING E3 ubiquitin-protein ligase complexes (ECS complexes), which mediate the ubiquitination and subsequent proteasomal degradation of target proteins. It is thereby involved in various biological processes, such as cell cycle progression, signal transduction and transcription. The functional specificity of the E3 ubiquitin-protein ligase ECS complexes depend on the variable SOCS box-containing substrate recognition component. Within ECS complexes, RNF7/RBX2 recruits the E2 ubiquitination enzyme to the complex via its RING-type and brings it into close proximity to the substrate. Catalytic subunit of various SOCS-containing ECS complexes, such as the ECS(SOCS7) complex, that regulate reelin signaling by mediating ubiquitination and degradation of DAB1. The ECS(SOCS2) complex mediates the ubiquitination and subsequent proteasomal degradation of phosphorylated EPOR and GHR. Promotes ubiquitination and degradation of NF1, thereby regulating Ras protein signal transduction. As part of the ECS(ASB9) complex, catalyzes ubiquitination and degradation of CKB. The ECS(SPSB3) complex catalyzes ubiquitination of nuclear CGAS. As part of the ECS(RAB40C) complex, mediates ANKRD28 ubiquitination and degradation, thereby inhibiting protein phosphatase 6 (PP6) complex activity and focal adhesion assembly during cell migration. As part of some ECS complex, catalyzes 'Lys-11'-linked ubiquitination and degradation of BTRC. ECS complexes and ARIH2 collaborate in tandem to mediate ubiquitination of target proteins; ARIH2 mediating addition of the first ubiquitin on CRLs targets. Specifically catalyzes the neddylation of CUL5 via its interaction with UBE2F. Does not catalyze neddylation of other cullins (CUL1, CUL2, CUL3, CUL4A or CUL4B). May play a role in protecting cells from apoptosis induced by redox agents. The sequence is that of RING-box protein 2 from Mus musculus (Mouse).